The following is a 518-amino-acid chain: MGQSTSAAGNSILNRRRSKSFTLKFPIESIESEISQPDYTSSLPDECLALVFQFLNSGNRKRCALVCRRWMIVEGQNRYRLSLHARSDLITSIPSLFSRFDSVTKLSLKCDRRSVSIGDEALVKISLRCRNLKRLKLRACRELTDVGMAAFAENCKDLKIFSCGSCDFGAKGVKAVLDHCSNLEELSIKRLRGFTDIAPEMIGPGVAASSLKSICLKELYNGQCFGPVIVGAKNLKSLKLFRCSGDWDLLLQEMSGKDHGVVEIHLERMQVSDVALSAISYCSSLESLHLVKTPECTNFGLAAIAEKCKRLRKLHIDGWKANLIGDEGLVAVAKFCSQLQELVLIGVNPTTLSLGMLAAKCLNLERLALCGCDTFGDPELSCIAAKCPALRKLCIKNCPISDVGIENLANGCPGLTKVKIKKCKGVLGGCADWLRTVRPMLSVNADTMEQEHEEAASNDVVGGSQENGIEFPQLNSQIMASSIASSSRNRSGYFKSGIGLFSGMSLVPCTSRQRRASR.

In terms of domain architecture, F-box spans 37 to 82; sequence PDYTSSLPDECLALVFQFLNSGNRKRCALVCRRWMIVEGQNRYRLS.

The polypeptide is F-box protein At1g47056 (Arabidopsis thaliana (Mouse-ear cress)).